The chain runs to 603 residues: Peroxisomal targeting signal receptor (603 aa).

C10 participates in a covalent cross-link: Glycyl cysteine thioester (Cys-Gly) (interchain with G-Cter in ubiquitin). The tract at residues 11-33 (SANSNAIAQFNKHTQQDRSLQRQ) is amphipathic helix 1 (AH1). K22 is covalently cross-linked (Glycyl lysine isopeptide (Lys-Gly) (interchain with G-Cter in ubiquitin)). Residues 23 to 49 (HTQQDRSLQRQAANQQGIVQNGQGFKK) are disordered. Positions 31-45 (QRQAANQQGIVQNGQ) are enriched in polar residues. The segment at 58–76 (RQNMDQFMNNGPSQSNFQF) is amphipathic helix 2 (AH2). 3 short sequence motifs (wxxxF/Y motif) span residues 99 to 103 (WTNEF), 128 to 132 (WATEF), and 192 to 196 (WDNQF). Residues 232-248 (FQEVWDSLNSEEVENDF) are amphipathic helix 4 (AH4). A WxxxF/Y motif 4 motif is present at residues 271–275 (WEKDF). TPR repeat units lie at residues 304 to 338 (ESDPYEIGLQLMENGAKLSEAALAFEAAIQRNEGH), 339 to 372 (INAWLKLGEVQTQNEKEIAGISALEKCLELHPEN), 449 to 482 (PDVQMGLGVLFYANEDFDKTIDCFKAALSIKPDD), 484 to 516 (VLWNRLGASLANSNRSEEAVDAYFKALELKPTF), and 518 to 550 (RARYNLGVSCINIGCYKEAAEHLLSGLSMHQVE).

Belongs to the peroxisomal targeting signal receptor family. In terms of assembly, interacts (via WxxxF/Y and LVxEF motifs) with PEX14; promoting translocation through the PEX13-PEX14 docking complex. Post-translationally, monoubiquitinated at Cys-10 by PEX2 during PEX5 passage through the retrotranslocation channel: monoubiquitination acts as a signal for PEX5 extraction and is required for proper export from peroxisomes and recycling. When PEX5 recycling is compromised, polyubiquitinated at Lys-22 by PEX10 during its passage through the retrotranslocation channel, leading to its degradation.

The protein resides in the cytoplasm. It localises to the cytosol. Its subcellular location is the peroxisome matrix. Receptor that mediates peroxisomal import of proteins containing a C-terminal PTS1-type tripeptide peroxisomal targeting signal (SKL-type). Binds to cargo proteins containing a PTS1 peroxisomal targeting signal in the cytosol, and translocates them into the peroxisome matrix by passing through the PEX13-PEX14 docking complex along with cargo proteins. PEX5 receptor is then retrotranslocated into the cytosol, leading to release of bound cargo in the peroxisome matrix, and reset for a subsequent peroxisome import cycle. The sequence is that of Peroxisomal targeting signal receptor (PEX5) from Debaryomyces hansenii (strain ATCC 36239 / CBS 767 / BCRC 21394 / JCM 1990 / NBRC 0083 / IGC 2968) (Yeast).